The primary structure comprises 142 residues: Hemoglobin subunit alpha (142 aa).

The region spanning 2-142 (VLSDANKQEI…LVHQLSSKYR (141 aa)) is the Globin domain. An O2-binding site is contributed by H60. H89 contributes to the heme b binding site.

Belongs to the globin family. In terms of assembly, heterotetramer of two alpha chains and two beta chains. Red blood cells.

Involved in oxygen transport from gills to the various peripheral tissues. The polypeptide is Hemoglobin subunit alpha (HBA) (Bathyraja eatonii (Eaton's skate)).